A 333-amino-acid polypeptide reads, in one-letter code: Holliday junction branch migration complex subunit RuvB (333 aa).

Residues 1–182 (MDERLLSGES…FGVLSRLEYY (182 aa)) form a large ATPase domain (RuvB-L) region. ATP-binding positions include Leu21, Arg22, Gly63, Lys66, Thr67, Thr68, 129–131 (EDF), Arg172, Tyr182, and Arg219. Thr67 contacts Mg(2+). Residues 183–253 (TVDQLSAIVE…ITQMALELLQ (71 aa)) are small ATPAse domain (RuvB-S). The tract at residues 256-333 (KLGLDHIDHK…EHFGMEIPKV (78 aa)) is head domain (RuvB-H). 2 residues coordinate DNA: Arg311 and Arg316.

The protein belongs to the RuvB family. In terms of assembly, homohexamer. Forms an RuvA(8)-RuvB(12)-Holliday junction (HJ) complex. HJ DNA is sandwiched between 2 RuvA tetramers; dsDNA enters through RuvA and exits via RuvB. An RuvB hexamer assembles on each DNA strand where it exits the tetramer. Each RuvB hexamer is contacted by two RuvA subunits (via domain III) on 2 adjacent RuvB subunits; this complex drives branch migration. In the full resolvosome a probable DNA-RuvA(4)-RuvB(12)-RuvC(2) complex forms which resolves the HJ.

The protein resides in the cytoplasm. It catalyses the reaction ATP + H2O = ADP + phosphate + H(+). The RuvA-RuvB-RuvC complex processes Holliday junction (HJ) DNA during genetic recombination and DNA repair, while the RuvA-RuvB complex plays an important role in the rescue of blocked DNA replication forks via replication fork reversal (RFR). RuvA specifically binds to HJ cruciform DNA, conferring on it an open structure. The RuvB hexamer acts as an ATP-dependent pump, pulling dsDNA into and through the RuvAB complex. RuvB forms 2 homohexamers on either side of HJ DNA bound by 1 or 2 RuvA tetramers; 4 subunits per hexamer contact DNA at a time. Coordinated motions by a converter formed by DNA-disengaged RuvB subunits stimulates ATP hydrolysis and nucleotide exchange. Immobilization of the converter enables RuvB to convert the ATP-contained energy into a lever motion, pulling 2 nucleotides of DNA out of the RuvA tetramer per ATP hydrolyzed, thus driving DNA branch migration. The RuvB motors rotate together with the DNA substrate, which together with the progressing nucleotide cycle form the mechanistic basis for DNA recombination by continuous HJ branch migration. Branch migration allows RuvC to scan DNA until it finds its consensus sequence, where it cleaves and resolves cruciform DNA. This is Holliday junction branch migration complex subunit RuvB from Bacillus cereus (strain B4264).